We begin with the raw amino-acid sequence, 210 residues long: Tumor protein D53 homolog (210 aa).

Residues 22-73 are a coiled coil; sequence VTDVDFTSMISEEEKEELKAELAKLEDEISTLRQVLAAKEKHLIEIKQKLGM. Polar residues predominate over residues 185–197; sequence SSTAHASAQSSLA. Residues 185 to 210 form a disordered region; the sequence is SSTAHASAQSSLAGTRLPESEEELQC.

The protein belongs to the TPD52 family. As to quaternary structure, forms a homodimer or heterodimer with other members of the family.

The protein is Tumor protein D53 homolog (TPD52L1) of Gallus gallus (Chicken).